The sequence spans 398 residues: Proteasome-activating nucleotidase (398 aa).

Residues 18–59 adopt a coiled-coil conformation; sequence IMYLKKRIRQLELQVRTLEADKERLERELSRLRMEMSRLRQP. ATP-binding positions include 183 to 188 and H322; that span reads GCGKTL. The segment at 396–398 is docks into pockets in the proteasome alpha-ring to cause gate opening; sequence MYG.

It belongs to the AAA ATPase family. Homohexamer. The hexameric complex has a two-ring architecture resembling a top hat that caps the 20S proteasome core at one or both ends. Upon ATP-binding, the C-terminus of PAN interacts with the alpha-rings of the proteasome core by binding to the intersubunit pockets.

Its subcellular location is the cytoplasm. Functionally, ATPase which is responsible for recognizing, binding, unfolding and translocation of substrate proteins into the archaeal 20S proteasome core particle. Is essential for opening the gate of the 20S proteasome via an interaction with its C-terminus, thereby allowing substrate entry and access to the site of proteolysis. Thus, the C-termini of the proteasomal ATPase function like a 'key in a lock' to induce gate opening and therefore regulate proteolysis. Unfolding activity requires energy from ATP hydrolysis, whereas ATP binding alone promotes ATPase-20S proteasome association which triggers gate opening, and supports translocation of unfolded substrates. This chain is Proteasome-activating nucleotidase, found in Thermococcus onnurineus (strain NA1).